We begin with the raw amino-acid sequence, 45 residues long: Large ribosomal subunit protein bL34 (45 aa).

It belongs to the bacterial ribosomal protein bL34 family.

The polypeptide is Large ribosomal subunit protein bL34 (Prochlorococcus marinus (strain MIT 9313)).